We begin with the raw amino-acid sequence, 442 residues long: tRNA-2-methylthio-N(6)-dimethylallyladenosine synthase (442 aa).

The MTTase N-terminal domain maps to 3 to 120 (KKLYIETHGC…LPEMIDAARI (118 aa)). [4Fe-4S] cluster contacts are provided by cysteine 12, cysteine 49, cysteine 83, cysteine 157, cysteine 161, and cysteine 164. The 233-residue stretch at 143 to 375 (RVDGPSAYVS…QHRLNQQGFE (233 aa)) folds into the Radical SAM core domain. Positions 378 to 442 (RQMVGSIQRI…PHSLRGSLLQ (65 aa)) constitute a TRAM domain.

It belongs to the methylthiotransferase family. MiaB subfamily. Monomer. It depends on [4Fe-4S] cluster as a cofactor.

It is found in the cytoplasm. The enzyme catalyses N(6)-dimethylallyladenosine(37) in tRNA + (sulfur carrier)-SH + AH2 + 2 S-adenosyl-L-methionine = 2-methylsulfanyl-N(6)-dimethylallyladenosine(37) in tRNA + (sulfur carrier)-H + 5'-deoxyadenosine + L-methionine + A + S-adenosyl-L-homocysteine + 2 H(+). Its function is as follows. Catalyzes the methylthiolation of N6-(dimethylallyl)adenosine (i(6)A), leading to the formation of 2-methylthio-N6-(dimethylallyl)adenosine (ms(2)i(6)A) at position 37 in tRNAs that read codons beginning with uridine. The chain is tRNA-2-methylthio-N(6)-dimethylallyladenosine synthase from Pseudomonas savastanoi pv. phaseolicola (strain 1448A / Race 6) (Pseudomonas syringae pv. phaseolicola (strain 1448A / Race 6)).